We begin with the raw amino-acid sequence, 546 residues long: Probable ganciclovir kinase (546 aa).

The span at Met1–Lys11 shows a compositional bias: polar residues. The tract at residues Met1–Arg29 is disordered. Residues Thr12 to Arg29 show a composition bias toward basic residues. ATP is bound by residues Leu185 to Val193 and Lys202. The active-site Proton acceptor is the Asp297.

Belongs to the protein kinase superfamily. Tyr protein kinase family. HCMV ganciclovir subfamily.

Phosphorylates the antiviral nucleoside analog ganciclovir. The protein is Probable ganciclovir kinase (U69) of Human herpesvirus 7 (strain JI) (HHV-7).